Here is a 340-residue protein sequence, read N- to C-terminus: Sulfotransferase ppzF (340 aa).

It functions in the pathway secondary metabolite biosynthesis. Its function is as follows. Sulfotransferase; part of the gene cluster that mediates the biosynthesis of pyrrolopyrazines, secondary metabolites showing insecticidal activity. The role of ppzF within the pathway has still to be determined. The single multifunctional NRPS ppzA is sufficient to produce peramine via condensation of 1-pyrroline-5-carboxylate and arginine, N-methylation of the alpha-amino group of arginine and reduction of the thioester and the cyclization to form an iminium ion resulting in release from the peptide synthetase. Deprotonation of this intermediate and oxidation of the pyrroline ring would give rise to peramine. In Epichloe species that produce only peramine, the peramine synthetase gene is not localized in a gene cluster, in contrast to Metarhizium species that contain additional pyrrolopyrazine biosynthesis genes. The 2-oxoglutarate-Fe(II) type oxidoreductase ppzC hydroxylates peramine to yield the newly identified compound 8-hydroxyperamine whereas ppzD converts L-proline into trans-4-hydroxy-L-proline, a precursor of peramine biosynthesis. In Metarhizium majus (strain ARSEF 297), this protein is Sulfotransferase ppzF.